Reading from the N-terminus, the 789-residue chain is MRTYRYFLLLFWVGQPYPTFSNPLSKRTSGFPAKRRALELSANSRNELSRSKRSWMWNQFFLLEEYTGSDYQYVGKLHSDQDRGDGSLKYILSGDGAGDLFIINENTGDIQATKRLDREEKPVYILRAQAINRRTGRPVEPESEFIIKIHDINDNEPIFTKDVYTATVPEMADVGTFVVQVTATDADDPTYGNSAKVVYSILQGQPYFSVESETGIIKTALLNMDRENREQYQVVIQAKDMGGQMGGLSGTTTVNITLTDVNDNPPRFPQSTYQFKTPESSPPGTPIGRIKASDADVGENAEIEYSITDGEGHDMFDVITDQETQEGIITVKKLLDFEKKRVYTLKVEASNPHIEPRFLYLGPFKDSATVRIVVDDVDEPPVFSKPAYILQIREDAQINTTIGSVAAQDPDAARNPVKYSVDRHTDMDRIFNIDSGNGSIFTSKLLDRETLLWHNITVIATEINNPKQSSRVPLYIKVLDVNDNAPEFAEFYETFVCEKAKADQLIQTLHAVDKDDPYSGHQFSFSLAPEAASGSNFTIQDNKDNTAGILTRKNGYNRHEMSTYLLPVVISDNDYPVQSSTGTVTVRVCACDHHGNMQSCHAEALIHPTGLSTGALVAILLCIVILLVTVVLFAALRRQRKKEPLIISKEDIRDNIVSYNDEGGGEEDTQAFDIGTLRNPKPWRQQSRRDMVPEALFLPRRTPTARDNTDVRDFISQRLRKMNTDPTAPPYDSLATYAYEGTGSVADSLSSLESVTTDGDQDYGYLSDWGPRFKKLADMYGGMDSDKDS.

The signal sequence occupies residues 1 to 18; that stretch reads MRTYRYFLLLFWVGQPYP. Positions 19-53 are excised as a propeptide; it reads TFSNPLSKRTSGFPAKRRALELSANSRNELSRSKR. Cadherin domains follow at residues 54–159, 160–268, 269–383, 384–486, and 487–608; these read SWMW…EPIF, TKDV…PPRF, PQST…PPVF, SKPA…DNAP, and EFAE…LIHP. Residues 54–615 lie on the Extracellular side of the membrane; that stretch reads SWMWNQFFLL…IHPTGLSTGA (562 aa). N-linked (GlcNAc...) asparagine glycosylation is present at Asn-255. Residues 259-288 form a disordered region; that stretch reads TDVNDNPPRFPQSTYQFKTPESSPPGTPIG. Positions 269–279 are enriched in polar residues; sequence PQSTYQFKTPE. N-linked (GlcNAc...) asparagine glycans are attached at residues Asn-399, Asn-437, Asn-455, and Asn-536. A helical membrane pass occupies residues 616–636; sequence LVAILLCIVILLVTVVLFAAL. The Cytoplasmic portion of the chain corresponds to 637 to 789; it reads RRQRKKEPLI…YGGMDSDKDS (153 aa). Ser-785 and Ser-789 each carry phosphoserine.

As to expression, highly expressed in kidney and brain.

It is found in the cell membrane. In terms of biological role, cadherins are calcium-dependent cell adhesion proteins. They preferentially interact with themselves in a homophilic manner in connecting cells; cadherins may thus contribute to the sorting of heterogeneous cell types. The polypeptide is Cadherin-6 (Cdh6) (Rattus norvegicus (Rat)).